We begin with the raw amino-acid sequence, 154 residues long: MYRMQLLSCIALSLALVTNSAPTSSSTKKTQLQLEHLLLDLQMILNGINNYKNPKLTRMLTFKFYMPKKATELKHLQCLEEELKPLEEVLNLAQSKNFHLRDTKDLISNINVIVLELKGSETTLMCEYADETATIVEFLNRWITFCQSIISTLT.

The signal sequence occupies residues 1–20 (MYRMQLLSCIALSLALVTNS). Residue threonine 23 is glycosylated (O-linked (GalNAc...) threonine). A disulfide bridge connects residues cysteine 78 and cysteine 126.

This sequence belongs to the IL-2 family.

Its subcellular location is the secreted. Functionally, cytokine produced by activated CD4-positive helper T-cells and to a lesser extend activated CD8-positive T-cells and natural killer (NK) cells that plays pivotal roles in the immune response and tolerance. Binds to a receptor complex composed of either the high-affinity trimeric IL-2R (IL2RA/CD25, IL2RB/CD122 and IL2RG/CD132) or the low-affinity dimeric IL-2R (IL2RB and IL2RG). Interaction with the receptor leads to oligomerization and conformation changes in the IL-2R subunits resulting in downstream signaling starting with phosphorylation of JAK1 and JAK3. In turn, JAK1 and JAK3 phosphorylate the receptor to form a docking site leading to the phosphorylation of several substrates including STAT5. This process leads to activation of several pathways including STAT, phosphoinositide-3-kinase/PI3K and mitogen-activated protein kinase/MAPK pathways. Functions as a T-cell growth factor and can increase NK-cell cytolytic activity as well. Promotes strong proliferation of activated B-cells and subsequently immunoglobulin production. Plays a pivotal role in regulating the adaptive immune system by controlling the survival and proliferation of regulatory T-cells, which are required for the maintenance of immune tolerance. Moreover, participates in the differentiation and homeostasis of effector T-cell subsets, including Th1, Th2, Th17 as well as memory CD8-positive T-cells. This chain is Interleukin-2 (IL2), found in Macaca mulatta (Rhesus macaque).